The primary structure comprises 469 residues: Probable monogalactosyldiacylglycerol synthase 2, chloroplastic (469 aa).

The N-terminal 42 residues, 1–42, are a transit peptide targeting the chloroplast; sequence MVISVATPRRSIRDAVLGGVLGAGGRQLYQPLRCAFYDGAAG.

Belongs to the glycosyltransferase 28 family.

Its subcellular location is the plastid. The protein localises to the chloroplast membrane. The catalysed reaction is a 1,2-diacyl-sn-glycerol + UDP-alpha-D-galactose = a 1,2-diacyl-3-O-(beta-D-galactosyl)-sn-glycerol + UDP + H(+). Involved in the synthesis of the major structural component of photosynthetic membranes. This Oryza sativa subsp. indica (Rice) protein is Probable monogalactosyldiacylglycerol synthase 2, chloroplastic (MGD2).